A 225-amino-acid chain; its full sequence is NAD(P)H-quinone oxidoreductase subunit K, chloroplastic (225 aa).

Positions 43, 44, 108, and 139 each coordinate [4Fe-4S] cluster.

The protein belongs to the complex I 20 kDa subunit family. NDH is composed of at least 16 different subunits, 5 of which are encoded in the nucleus. It depends on [4Fe-4S] cluster as a cofactor.

Its subcellular location is the plastid. It localises to the chloroplast thylakoid membrane. The catalysed reaction is a plastoquinone + NADH + (n+1) H(+)(in) = a plastoquinol + NAD(+) + n H(+)(out). It catalyses the reaction a plastoquinone + NADPH + (n+1) H(+)(in) = a plastoquinol + NADP(+) + n H(+)(out). Functionally, NDH shuttles electrons from NAD(P)H:plastoquinone, via FMN and iron-sulfur (Fe-S) centers, to quinones in the photosynthetic chain and possibly in a chloroplast respiratory chain. The immediate electron acceptor for the enzyme in this species is believed to be plastoquinone. Couples the redox reaction to proton translocation, and thus conserves the redox energy in a proton gradient. The sequence is that of NAD(P)H-quinone oxidoreductase subunit K, chloroplastic from Manihot esculenta (Cassava).